A 58-amino-acid chain; its full sequence is Small ribosomal subunit protein bS21 (58 aa).

Residues Ile-32–Ser-42 are compositionally biased toward basic and acidic residues. The interval Ile-32–Asn-58 is disordered. Over residues Val-43–Asn-58 the composition is skewed to basic residues.

This sequence belongs to the bacterial ribosomal protein bS21 family.

This Lachnospira eligens (strain ATCC 27750 / DSM 3376 / VPI C15-48 / C15-B4) (Eubacterium eligens) protein is Small ribosomal subunit protein bS21.